The following is a 176-amino-acid chain: Shikimate kinase (176 aa).

12–17 contributes to the ATP binding site; the sequence is GSGKST. Ser16 contacts Mg(2+). The substrate site is built by Asp34, Arg58, and Gly80. Arg117 contributes to the ATP binding site. A substrate-binding site is contributed by Arg136. Arg153 is a binding site for ATP.

The protein belongs to the shikimate kinase family. Monomer. It depends on Mg(2+) as a cofactor.

It is found in the cytoplasm. The enzyme catalyses shikimate + ATP = 3-phosphoshikimate + ADP + H(+). The protein operates within metabolic intermediate biosynthesis; chorismate biosynthesis; chorismate from D-erythrose 4-phosphate and phosphoenolpyruvate: step 5/7. In terms of biological role, catalyzes the specific phosphorylation of the 3-hydroxyl group of shikimic acid using ATP as a cosubstrate. This Mycobacterium avium (strain 104) protein is Shikimate kinase.